The chain runs to 388 residues: Acetate kinase (388 aa).

Position 14 (asparagine 14) interacts with Mg(2+). Lysine 21 lines the ATP pocket. Arginine 80 lines the substrate pocket. Catalysis depends on aspartate 137, which acts as the Proton donor/acceptor. Residues 197 to 201 (HLGNG), 271 to 273 (DFR), and 319 to 323 (GIGEH) each bind ATP. Mg(2+) is bound at residue glutamate 373.

Belongs to the acetokinase family. As to quaternary structure, homodimer. Mg(2+) is required as a cofactor. Requires Mn(2+) as cofactor.

It is found in the cytoplasm. The enzyme catalyses acetate + ATP = acetyl phosphate + ADP. It functions in the pathway metabolic intermediate biosynthesis; acetyl-CoA biosynthesis; acetyl-CoA from acetate: step 1/2. Its function is as follows. Catalyzes the formation of acetyl phosphate from acetate and ATP. Can also catalyze the reverse reaction. The polypeptide is Acetate kinase (Mycobacterium marinum (strain ATCC BAA-535 / M)).